The primary structure comprises 411 residues: Multifunctional CCA protein (411 aa).

ATP is bound by residues Gly8 and Arg11. CTP is bound by residues Gly8 and Arg11. Asp21 and Asp23 together coordinate Mg(2+). ATP-binding residues include Arg91, Arg137, and Arg140. Residues Arg91, Arg137, and Arg140 each coordinate CTP. One can recognise an HD domain in the interval 228 to 329; that stretch reads CGIHTLMVAK…VNILDQIDSW (102 aa).

It belongs to the tRNA nucleotidyltransferase/poly(A) polymerase family. Bacterial CCA-adding enzyme type 1 subfamily. As to quaternary structure, monomer. Can also form homodimers and oligomers. Mg(2+) is required as a cofactor. Requires Ni(2+) as cofactor.

It carries out the reaction a tRNA precursor + 2 CTP + ATP = a tRNA with a 3' CCA end + 3 diphosphate. The enzyme catalyses a tRNA with a 3' CCA end + 2 CTP + ATP = a tRNA with a 3' CCACCA end + 3 diphosphate. Functionally, catalyzes the addition and repair of the essential 3'-terminal CCA sequence in tRNAs without using a nucleic acid template. Adds these three nucleotides in the order of C, C, and A to the tRNA nucleotide-73, using CTP and ATP as substrates and producing inorganic pyrophosphate. tRNA 3'-terminal CCA addition is required both for tRNA processing and repair. Also involved in tRNA surveillance by mediating tandem CCA addition to generate a CCACCA at the 3' terminus of unstable tRNAs. While stable tRNAs receive only 3'-terminal CCA, unstable tRNAs are marked with CCACCA and rapidly degraded. The chain is Multifunctional CCA protein from Photobacterium profundum (strain SS9).